The chain runs to 290 residues: Probable transcriptional regulatory protein HAH1 (290 aa).

It belongs to the TACO1 family.

Its subcellular location is the mitochondrion. In Saccharomyces cerevisiae (strain ATCC 204508 / S288c) (Baker's yeast), this protein is Probable transcriptional regulatory protein HAH1.